A 921-amino-acid polypeptide reads, in one-letter code: Retinoblastoma-associated protein (921 aa).

Disordered regions lie at residues 1–31 and 603–634; these read MPPK…PPGG and RSPK…QKPQ. The segment covering 612–634 has biased composition (polar residues); sequence HPQSGTSNPDAQPSATSQTQKPQ. Positions 853–869 match the Bipartite nuclear localization signal motif; it reads KRSAEPSDAPKPLKRLR. A disordered region spans residues 873–921; that stretch reads EGQDEADGGKHLPQESKFQQKLAEMTSTRTRMQKQKLNDGNDTSANEEK. The span at 910-921 shows a compositional bias: polar residues; it reads NDGNDTSANEEK.

It belongs to the retinoblastoma protein (RB) family. As to quaternary structure, interacts with and sequesters the E2F1 transcription factor, thereby inhibiting E2F1 transcription. Interacts with SUV39H1, KMT5B and KMT5C. In terms of assembly, (Microbial infection) Interacts with, and is inhibited by fowl adenovirus 1 protein GAM-1. In terms of processing, phosphorylated in G1, thereby releasing E2F1 which is then able to activate cell growth. Dephosphorylated at the late M phase. Phosphorylation of domain C promotes interaction between the C-terminal domain C and the Pocket domain, and thereby inhibits interactions with heterodimeric E2F/DP transcription factor complexes.

It is found in the nucleus. The protein resides in the cytoplasm. Functionally, tumor suppressor that is a key regulator of the G1/S transition of the cell cycle. The hypophosphorylated form binds transcription regulators of the E2F family, preventing transcription of E2F-responsive genes. Both physically blocks E2Fs transactivating domain and recruits chromatin-modifying enzymes that actively repress transcription. Cyclin and CDK-dependent phosphorylation of RB1 induces its dissociation from E2Fs, thereby activating transcription of E2F responsive genes and triggering entry into S phase. RB1 also promotes the G0-G1 transition upon phosphorylation and activation by CDK3/cyclin-C. The polypeptide is Retinoblastoma-associated protein (RB1) (Gallus gallus (Chicken)).